A 603-amino-acid polypeptide reads, in one-letter code: Grainyhead-like protein 3 homolog (603 aa).

The tract at residues 30–95 is transcription activation; the sequence is EAWKTYLENP…QGKKFYHSMD (66 aa). The Grh/CP2 DB domain occupies 226–461; that stretch reads GLKSDFEYTL…DLETQPVLFI (236 aa).

Belongs to the grh/CP2 family. Grainyhead subfamily. In terms of assembly, homodimer, also forms heterodimers with GRHL1 and GRHL2. Interacts with LMO4.

It is found in the nucleus. In terms of biological role, transcription factor playing important roles in primary neurulation and in the differentiation of stratified epithelia of both ectodermal and endodermal origin. Binds directly to the consensus DNA sequence 5'-AACCGGTT-3' acting as an activator and repressor on distinct target genes. Essential for epidermal differentiation and barrier formation at the end of embryogenesis with TGM3 as critical direct target. Exhibits functional redundancy with GRHL2 in epidermal morphogenetic events such as eyelid fusion and epidermal wound repair. Despite being dispensable during normal epidermal homeostasis in the adulthood, is again required for barrier repair after immune-mediated epidermal damage, regulates distinct gene batteries in embryonic epidermal differentiation and adult epidermal barrier reformation after injury. Plays unique and cooperative roles with GRHL2 in establishing distinct zones of primary neurulation. Essential for spinal closure, functions cooperatively with GRHL2 in closure 2 (forebrain/midbrain boundary) and posterior neuropore closure. Also required for proper development of the oral periderm. No genetic interaction with GRHL1, no functional cooperativity due to diverse target gene selectivity. This is Grainyhead-like protein 3 homolog from Mus musculus (Mouse).